A 530-amino-acid chain; its full sequence is RNA-binding protein 39 (530 aa).

The disordered stretch occupies residues 1 to 146; that stretch reads MADDIDIEAM…PVREPIDNLT (146 aa). A2 is modified (N-acetylalanine). Basic and acidic residues predominate over residues 14-32; sequence PYKKDENKLSSANGHEERS. 2 stretches are compositionally biased toward basic residues: residues 33–56 and 64–95; these read KKRK…KERK and KKSK…RGRY. Y95 carries the post-translational modification Phosphotyrosine. Phosphoserine occurs at positions 97 and 100. K111 participates in a covalent cross-link: Glycyl lysine isopeptide (Lys-Gly) (interchain with G-Cter in SUMO2). S117 carries the phosphoserine modification. A Glycyl lysine isopeptide (Lys-Gly) (interchain with G-Cter in SUMO2) cross-link involves residue K119. Positions 119–130 are enriched in basic residues; sequence KLSRRRSRSKSP. A phosphoserine mark is found at S121 and S136. Residues 131 to 146 show a composition bias toward basic and acidic residues; the sequence is FRKDKSPVREPIDNLT. T146 is subject to Phosphothreonine. Residues 153–230 enclose the RRM 1 domain; it reads RTVFCMQLAA…VPIIVQASQA (78 aa). A Glycyl lysine isopeptide (Lys-Gly) (interchain with G-Cter in SUMO2) cross-link involves residue K244. Residues 250–328 enclose the RRM 2 domain; that stretch reads MRLYVGSLHF…RPMKVGHVTE (79 aa). An activating domain region spans residues 291–355; that stretch reads KGYGFITFSD…RTGIDLGTTG (65 aa). The interval 291–406 is interaction with JUN; that stretch reads KGYGFITFSD…IDLQTRLSQQ (116 aa). Phosphoserine is present on residues S334, S337, and S341. The tract at residues 355 to 406 is interaction with ESR1 and ESR2; it reads GRLQLMARLAEGTGLQIPPAAQQALQMSGSLAFGAVAEFSFVIDLQTRLSQQ. The interaction with NCOA6 stretch occupies residues 406–530; it reads QTEASALAAA…ATQLLVPSRR (125 aa). The region spanning 445-508 is the RRM 3 domain; sequence EIKDDVIEEC…KMITAAYVPL (64 aa).

The protein belongs to the splicing factor SR family. In terms of assembly, interacts with NCOA6 and JUN. Interacts with ESR1 and ESR2, in the presence of estradiol (E2). Interacts with RSRC1 (via Arg/Ser-rich domain). Interacts with SF3B1. Interacts with ZNF106 (via N-terminus). In terms of processing, aryl sulfonamide anticancer drugs, such as indisulam (E7070) or E7820, promote ubiquitination and subsequent degradation by the DCX(DCAF15) complex. RBM39 degradation results in splicing defects and death in cancer cell lines. Aryl sulfonamide anticancer drugs change the substrate specificity of DCAF15 by acting as a molecular glue that promotes binding between DCAF15 and weak affinity interactor RBM39. As to expression, widely expressed. Highly expressed in pancreas, skeletal muscle, lung and brain. Expressed at intermediate level in kidney, liver and heart.

The protein resides in the nucleus speckle. In terms of biological role, RNA-binding protein that acts as a pre-mRNA splicing factor. Acts by promoting exon inclusion via regulation of exon cassette splicing. Also acts as a transcriptional coactivator for steroid nuclear receptors ESR1/ER-alpha and ESR2/ER-beta, and JUN/AP-1, independently of the pre-mRNA splicing factor activity. In Homo sapiens (Human), this protein is RNA-binding protein 39.